The sequence spans 150 residues: Transcriptional repressor NrdR (150 aa).

The segment at 3–34 (CPFCAFADSKVVDSRPDKEGSTIRRRRECESC) is a zinc-finger region. The ATP-cone domain maps to 49–139 (PLVIKKDGRR…VYRSFKDITE (91 aa)).

This sequence belongs to the NrdR family. It depends on Zn(2+) as a cofactor.

In terms of biological role, negatively regulates transcription of bacterial ribonucleotide reductase nrd genes and operons by binding to NrdR-boxes. This chain is Transcriptional repressor NrdR, found in Geotalea daltonii (strain DSM 22248 / JCM 15807 / FRC-32) (Geobacter daltonii).